Consider the following 339-residue polypeptide: Glucokinase (339 aa).

16–21 (GDIGGT) is a binding site for ATP.

It belongs to the bacterial glucokinase family.

It localises to the cytoplasm. The catalysed reaction is D-glucose + ATP = D-glucose 6-phosphate + ADP + H(+). The polypeptide is Glucokinase (Rhizobium meliloti (strain 1021) (Ensifer meliloti)).